We begin with the raw amino-acid sequence, 796 residues long: High affinity nerve growth factor receptor (796 aa).

A signal peptide spans 1–32; the sequence is MLRGGRRGQLGWHSWAAGPGSLLAWLILASAG. The Extracellular segment spans residues 33–423; that stretch reads AAPCPDACCP…TPFGVSVAVG (391 aa). 2 cysteine pairs are disulfide-bonded: cysteine 36/cysteine 41 and cysteine 40/cysteine 50. Asparagine 67, asparagine 95, asparagine 121, asparagine 188, asparagine 202, asparagine 253, asparagine 262, asparagine 281, asparagine 318, asparagine 323, asparagine 338, asparagine 358, and asparagine 401 each carry an N-linked (GlcNAc...) asparagine glycan. LRR repeat units follow at residues 90 to 113 and 116 to 137; these read LGELRNLTIVKSGLRFVAPDAFHF and RLSRLNLSFNALESLSWKTVQG. In terms of domain architecture, LRRCT spans 148–193; the sequence is NPLHCSCALRWLQRWEEEGLGGVPEQKLQCHGQGPLAHMPNASCGV. A disulfide bond links cysteine 154 and cysteine 191. Ig-like C2-type domains follow at residues 194–283 and 299–365; these read PTLK…VNVS and WCIP…LAAN. A disulfide bridge links cysteine 215 with cysteine 265. Cysteine 300 and cysteine 345 are joined by a disulfide. Residues 424–439 form a helical membrane-spanning segment; that stretch reads LAVFACLFLSTLLLVL. The Cytoplasmic portion of the chain corresponds to 440-796; that stretch reads NKCGRRNKFG…APPVYLDVLG (357 aa). An interaction with SQSTM1 region spans residues 469–490; it reads MTLGGSSLSPTEGKGSGLQGHI. Tyrosine 496 is subject to Phosphotyrosine; by autocatalysis. Positions 510–781 constitute a Protein kinase domain; that stretch reads IVLKWELGEG…HSIKDVHARL (272 aa). ATP is bound at residue 516 to 524; the sequence is LGEGAFGKV. Positions 537–541 match the DXXLL motif; sequence DKMLV. Residue lysine 544 coordinates ATP. A DXXLL motif is present at residues 607 to 611; the sequence is DAKLL. Aspartate 650 serves as the catalytic Proton acceptor. Residues tyrosine 676, tyrosine 680, tyrosine 681, and tyrosine 791 each carry the phosphotyrosine; by autocatalysis modification.

This sequence belongs to the protein kinase superfamily. Tyr protein kinase family. Insulin receptor subfamily. Exists in a dynamic equilibrium between monomeric (low affinity) and dimeric (high affinity) structures. Homodimerization is induced by binding of a NGF dimer. Interacts with SQSTM1; bridges NTRK1 to NGFR. Forms a ternary complex with NGFR and KIDINS220; this complex is affected by the expression levels of KIDINS220 and an increase in KIDINS220 expression leads to a decreased association of NGFR and NTRK1. Interacts with SH2D1A; regulates NTRK1. Interacts (phosphorylated upon activation by NGF) with SHC1; mediates SHC1 phosphorylation and activation. Interacts (phosphorylated upon activation by NGF) with PLCG1; mediates PLCG1 phosphorylation and activation. Interacts (phosphorylated) with SH2B1 and SH2B2. Interacts with GRB2. Interacts with PIK3R1. Interacts with FRS2. Interacts with SORT1; may regulate NTRK1 anterograde axonal transport. Interacts with RAB7A. Found in a complex, at least composed of KIDINS220, MAGI2, NTRK1 and RAPGEF2; the complex is mainly formed at late endosomes in a nerve growth factor (NGF)-dependent manner. Interacts with RAPGEF2; the interaction is strengthened after NGF stimulation. Interacts with PTPRS. Interacts with USP36; USP36 does not deubiquitinate NTRK1. Interacts with GGA3. Interacts with TSPAN1; this interaction promotes NTRK1 stability. In terms of processing, ligand-mediated autophosphorylation. Interaction with SQSTM1 is phosphotyrosine-dependent. Autophosphorylation at Tyr-496 mediates interaction and phosphorylation of SHC1. Post-translationally, N-glycosylated. Isoform TrkA-I and isoform TrkA-II are N-glycosylated. Ubiquitinated. Undergoes polyubiquitination upon activation; regulated by NGFR. Ubiquitination by NEDD4L leads to degradation. Ubiquitination regulates the internalization of the receptor. In terms of tissue distribution, isoform TrkA-I is found in most non-neuronal tissues. Isoform TrkA-II is primarily expressed in neuronal cells. TrkA-III is specifically expressed by pluripotent neural stem and neural crest progenitors.

It is found in the cell membrane. The protein resides in the early endosome membrane. It localises to the late endosome membrane. Its subcellular location is the recycling endosome membrane. The enzyme catalyses L-tyrosyl-[protein] + ATP = O-phospho-L-tyrosyl-[protein] + ADP + H(+). The pro-survival signaling effect of NTRK1 in neurons requires its endocytosis into signaling early endosomes and its retrograde axonal transport. This is regulated by different proteins including CFL1, RAC1 and SORT1. NTF3 is unable to induce this signaling probably due to the lability of the NTF3-NTRK1 complex in endosomes. SH2D1A inhibits the autophosphorylation of the receptor, and alters the recruitment and activation of downstream effectors and signaling cascades. Regulated by NGFR. In terms of biological role, receptor tyrosine kinase involved in the development and the maturation of the central and peripheral nervous systems through regulation of proliferation, differentiation and survival of sympathetic and nervous neurons. High affinity receptor for NGF which is its primary ligand. Can also bind and be activated by NTF3/neurotrophin-3. However, NTF3 only supports axonal extension through NTRK1 but has no effect on neuron survival. Upon dimeric NGF ligand-binding, undergoes homodimerization, autophosphorylation and activation. Recruits, phosphorylates and/or activates several downstream effectors including SHC1, FRS2, SH2B1, SH2B2 and PLCG1 that regulate distinct overlapping signaling cascades driving cell survival and differentiation. Through SHC1 and FRS2 activates a GRB2-Ras-MAPK cascade that regulates cell differentiation and survival. Through PLCG1 controls NF-Kappa-B activation and the transcription of genes involved in cell survival. Through SHC1 and SH2B1 controls a Ras-PI3 kinase-AKT1 signaling cascade that is also regulating survival. In absence of ligand and activation, may promote cell death, making the survival of neurons dependent on trophic factors. Resistant to NGF, it constitutively activates AKT1 and NF-kappa-B and is unable to activate the Ras-MAPK signaling cascade. Antagonizes the anti-proliferative NGF-NTRK1 signaling that promotes neuronal precursors differentiation. Isoform TrkA-III promotes angiogenesis and has oncogenic activity when overexpressed. The chain is High affinity nerve growth factor receptor (NTRK1) from Homo sapiens (Human).